We begin with the raw amino-acid sequence, 917 residues long: DNA repair endonuclease XPF (917 aa).

Positions 1–457 (MEPGLSGERR…EVWVNVRKGD (457 aa)) are helicase-like. Leucine-zipper regions lie at residues 233-254 (LNACLKELKCHNPSLEVEDLSL) and 270-298 (LDPLWHQLGAKTKSLVQDLKILRTLLQYL). Lys289 is modified (N6-acetyllysine). A compositionally biased stretch (basic and acidic residues) spans 454–479 (RKGDGPKRTTKSDKRPKAAPNKERAS). Disordered regions lie at residues 454–524 (RKGD…SSPE) and 643–681 (VPEEREGRDETNLDLARGSAALDAPTDTRKAGGQEQNGT). The Nuclear localization signal signature appears at 487 to 492 (KRKKQE). A compositionally biased stretch (basic and acidic residues) spans 507 to 516 (EDKALEEDLC). At Ser522 the chain carries Phosphoserine. A compositionally biased stretch (basic and acidic residues) spans 643–653 (VPEEREGRDET). Residues 659-814 (RGSAALDAPT…PSPHATAELF (156 aa)) form a nuclease region. An ERCC4 domain is found at 684–764 (SIVVDMREFR…RPVLLIEFDP (81 aa)). Ser765 carries the post-translational modification Phosphoserine. Residues 838–906 (TLPESDRYNP…QLHDFLHTAY (69 aa)) are hhH2, dimerization with ERCC1. Lys912 carries the N6-acetyllysine modification.

Belongs to the XPF family. Heterodimer composed of ERCC1 and ERCC4/XPF. Interacts with SLX4/BTBD12; this interaction is direct and links the ERCC1-ERCC4/XPF complex to SLX4, which may coordinate the action of the structure-specific endonuclease during DNA repair. Mg(2+) is required as a cofactor. Post-translationally, acetylation at Lys-912 by KAT5 promotes interaction with ERCC1 by disrupting a salt bridge between Asp-908 and Lys-912, thereby exposing a second binding site for ERCC1. Deacetylated by SIRT1.

It localises to the nucleus. The protein resides in the chromosome. Functionally, catalytic component of a structure-specific DNA repair endonuclease responsible for the 5-prime incision during DNA repair, and which is essential for nucleotide excision repair (NER) and interstrand cross-link (ICL) repair. This chain is DNA repair endonuclease XPF, found in Mus musculus (Mouse).